The following is a 202-amino-acid chain: Glycerol-3-phosphate acyltransferase (202 aa).

The next 4 helical transmembrane spans lie at 11–31 (VLIA…GLIL), 87–107 (PALA…WLGF), 116–136 (FIGV…AIWL), and 158–178 (LILW…LAAL).

Belongs to the PlsY family. As to quaternary structure, probably interacts with PlsX.

The protein resides in the cell inner membrane. The enzyme catalyses an acyl phosphate + sn-glycerol 3-phosphate = a 1-acyl-sn-glycero-3-phosphate + phosphate. Its pathway is lipid metabolism; phospholipid metabolism. Its function is as follows. Catalyzes the transfer of an acyl group from acyl-phosphate (acyl-PO(4)) to glycerol-3-phosphate (G3P) to form lysophosphatidic acid (LPA). This enzyme utilizes acyl-phosphate as fatty acyl donor, but not acyl-CoA or acyl-ACP. The chain is Glycerol-3-phosphate acyltransferase from Methylorubrum extorquens (strain PA1) (Methylobacterium extorquens).